The following is a 290-amino-acid chain: F-box protein PP2-A13 (290 aa).

In terms of domain architecture, F-box spans 21-67 (RKLRLVDLPENCVALIMTRLDPPEICRLARLNRMFRRASSADFIWES).

Part of a SCF (ASK-cullin-F-box) protein ligase complex. Interacts with SKP1A/ASK1, SKP1B/ASK2, ASK5, ASK11 and ASK13.

Its subcellular location is the nucleus. Its pathway is protein modification; protein ubiquitination. Component of SCF(ASK-cullin-F-box) E3 ubiquitin ligase complexes, which may mediate the ubiquitination and subsequent proteasomal degradation of target proteins. In Arabidopsis thaliana (Mouse-ear cress), this protein is F-box protein PP2-A13 (PP2A13).